The following is a 178-amino-acid chain: Large ribosomal subunit protein bL25 (178 aa).

This sequence belongs to the bacterial ribosomal protein bL25 family. CTC subfamily. Part of the 50S ribosomal subunit; part of the 5S rRNA/L5/L18/L25 subcomplex. Contacts the 5S rRNA. Binds to the 5S rRNA independently of L5 and L18.

Functionally, this is one of the proteins that binds to the 5S RNA in the ribosome where it forms part of the central protuberance. In Sulfurimonas denitrificans (strain ATCC 33889 / DSM 1251) (Thiomicrospira denitrificans (strain ATCC 33889 / DSM 1251)), this protein is Large ribosomal subunit protein bL25.